Here is a 153-residue protein sequence, read N- to C-terminus: 3-hydroxyacyl-[acyl-carrier-protein] dehydratase FabZ (153 aa).

The active site involves histidine 53.

This sequence belongs to the thioester dehydratase family. FabZ subfamily.

It localises to the cytoplasm. It catalyses the reaction a (3R)-hydroxyacyl-[ACP] = a (2E)-enoyl-[ACP] + H2O. Functionally, involved in unsaturated fatty acids biosynthesis. Catalyzes the dehydration of short chain beta-hydroxyacyl-ACPs and long chain saturated and unsaturated beta-hydroxyacyl-ACPs. The protein is 3-hydroxyacyl-[acyl-carrier-protein] dehydratase FabZ of Lawsonia intracellularis (strain PHE/MN1-00).